Reading from the N-terminus, the 194-residue chain is Lectin-C (194 aa).

The N-terminal stretch at 1-26 (MKRSNSIAVMLVLVLSSLMLLLPVEG) is a signal peptide. The propeptide at 27 to 44 (QGHEGHGVGEILLMGKLG) is removed in mature form. 3 consecutive Chitin-binding type-1 domains span residues 45 to 86 (APVC…QCDY), 87 to 127 (NRCG…QCSY), and 128 to 168 (WRCG…QCDL). 12 cysteine pairs are disulfide-bonded: Cys-48–Cys-63, Cys-57–Cys-69, Cys-62–Cys-76, Cys-80–Cys-84, Cys-89–Cys-104, Cys-98–Cys-110, Cys-103–Cys-117, Cys-121–Cys-125, Cys-130–Cys-145, Cys-139–Cys-151, Cys-144–Cys-158, and Cys-162–Cys-166. Positions 171–194 (LLPSPLRRIIAIRKLKANLANMLS) are cleaved as a propeptide — removed in mature form.

As to quaternary structure, homodimer. The homodimers are asymmetric; formed in a 'head-to-tail' fashion via hydrophobic interactions between aromatic residues of the carbohydrate-binding sites of each subunit.

N-acetyl-D-glucosamine binding lectin. Almost no hemagglutinating activity towards human erythrocytes. Low mitogenic activity towards human peripheral blood lymphocytes. In Phytolacca americana (American pokeweed), this protein is Lectin-C.